We begin with the raw amino-acid sequence, 314 residues long: Olfactory receptor 1 (314 aa).

At 1–29 (MTERNQTVISQFLLLGLPIPPEHQHVFYA) the chain is on the extracellular side. Asn5 carries N-linked (GlcNAc...) asparagine glycosylation. Residues 30-50 (LFLSMYLTTVLGNLIIIILIL) form a helical membrane-spanning segment. Over 51 to 59 (LDSHLHTPM) the chain is Cytoplasmic. Residues 60 to 81 (YLFLSNLSFSDLCFSSVTMPKL) form a helical membrane-spanning segment. Topologically, residues 82 to 97 (LQNMQSQVPSIPYAGC) are extracellular. A disulfide bridge connects residues Cys97 and Cys179. A helical transmembrane segment spans residues 98 to 118 (LSQIYFFLFFGDLGNFLLVAM). At 119–143 (AYDRYVAICFPLHYMSIMSPKLCVS) the chain is on the cytoplasmic side. The helical transmembrane segment at 144–164 (LVVLSWVLTTFHAMLHTLLMA) threads the bilayer. Residues 165–196 (RLSFCEDNVIPHFFCDMSALLKLACSDTRVNE) lie on the Extracellular side of the membrane. The helical transmembrane segment at 197 to 217 (VVIFIVVSLFLVLPFALIIMS) threads the bilayer. The Cytoplasmic segment spans residues 218–240 (YVRIVSSILKVPSSQGIYKAFST). Residues 241–261 (CGSHLSVVSLFYGTVIGLYLC) form a helical membrane-spanning segment. At 262–271 (PSSNNSTVKE) the chain is on the extracellular side. N-linked (GlcNAc...) asparagine glycans are attached at residues Asn265 and Asn266. The helical transmembrane segment at 272 to 292 (TVMSLMYTVVTPMLNPFIYSL) threads the bilayer. The Cytoplasmic portion of the chain corresponds to 293–314 (RNRDIKGAMERIFCKRKIQLNL).

The protein belongs to the G-protein coupled receptor 1 family. Olfactory epithelium.

It localises to the cell membrane. In terms of biological role, odorant receptor. Activated by a lily-derived aldehyde as well as other odorants. May signal through an inositol 1,4,5-trisphosphate (IP3) second messenger system. This Rattus norvegicus (Rat) protein is Olfactory receptor 1.